A 115-amino-acid polypeptide reads, in one-letter code: U3-lycotoxin-Ls1k (115 aa).

An N-terminal signal peptide occupies residues 1–20; the sequence is MKSVLLFGVLLVTLFSYSSA. A propeptide spanning residues 21–44 is cleaved from the precursor; sequence EMLDDFDQADEDELLSLIEKEEAR. Disulfide bonds link C48/C63, C55/C72, C62/C87, and C74/C85.

Belongs to the neurotoxin 19 (CSTX) family. 01 subfamily. In terms of tissue distribution, expressed by the venom gland.

The protein localises to the secreted. This Lycosa singoriensis (Wolf spider) protein is U3-lycotoxin-Ls1k.